We begin with the raw amino-acid sequence, 459 residues long: Putative metabolite transport protein YdjK (459 aa).

The Cytoplasmic segment spans residues 1 to 25; the sequence is MEQITKPHCGARLDRLPDCRWHSSM. A helical transmembrane segment spans residues 26–46; the sequence is FAIVAFGLLVCWSNAVGGLIL. Residues 47–60 are Periplasmic-facing; the sequence is AQLKALGWTDNSTT. Residues 61 to 81 traverse the membrane as a helical segment; the sequence is ATFSAITTAGMFLGALVGGII. Residues 82 to 90 lie on the Cytoplasmic side of the membrane; sequence GDKTGRRNA. A helical transmembrane segment spans residues 91–111; it reads FILYEAIHIASMVVGAFSPNM. A topological domain (periplasmic) is located at residue Asp112. Residues 113–133 traverse the membrane as a helical segment; the sequence is FLIACRFVMGVGLGALLVTLF. At 134-153 the chain is on the cytoplasmic side; sequence AGFTEYMPGRNRGTWSSRVS. A helical transmembrane segment spans residues 154–174; it reads FIGNWSYPLCSLIAMGLTPLI. Topologically, residues 175-181 are periplasmic; the sequence is SAEWNWR. A helical transmembrane segment spans residues 182-202; that stretch reads VQLLIPAILSLIATALAWRYF. The Cytoplasmic portion of the chain corresponds to 203–271; that stretch reads PESPRWLESR…LLKRVILGSC (69 aa). The chain crosses the membrane as a helical span at residues 272-292; sequence VLIAMNVVQYTLINWLPTIFM. Residues 293-301 are Periplasmic-facing; sequence TQGINLKDS. The chain crosses the membrane as a helical span at residues 302 to 322; the sequence is IVLNTMSMFGAPFGIFIAMLV. Over 323-329 the chain is Cytoplasmic; sequence MDKIPRK. The helical transmembrane segment at 330 to 350 threads the bilayer; the sequence is TMGVGLLILIAVLGYIYSLQT. A topological domain (periplasmic) is located at residue Ser351. The chain crosses the membrane as a helical span at residues 352 to 372; sequence MLLITLIGFFLITFVYMYVCY. The Cytoplasmic segment spans residues 373 to 399; the sequence is ASAVYVPEIWPTEAKLRGSGLANAVGR. The next 2 membrane-spanning stretches (helical) occupy residues 400-420 and 421-441; these read ISGI…GVTG and VFIL…TIGI. Topologically, residues 442 to 459 are cytoplasmic; sequence ETKGVSVESLSIDAVANK.

This sequence belongs to the major facilitator superfamily. Sugar transporter (TC 2.A.1.1) family.

It is found in the cell inner membrane. In Escherichia coli (strain K12), this protein is Putative metabolite transport protein YdjK (ydjK).